The following is a 125-amino-acid chain: Acidic phospholipase A2 HTe (125 aa).

Disulfide bonds link cysteine 11/cysteine 77, cysteine 27/cysteine 124, cysteine 29/cysteine 45, cysteine 44/cysteine 105, cysteine 51/cysteine 98, cysteine 61/cysteine 91, and cysteine 84/cysteine 96. Positions 28, 30, and 32 each coordinate Ca(2+). The active site involves histidine 48. Aspartate 49 is a Ca(2+) binding site. Aspartate 99 is an active-site residue.

This sequence belongs to the phospholipase A2 family. Group I subfamily. D49 sub-subfamily. Ca(2+) serves as cofactor. Post-translationally, no glycosylation was detected on this protein. As to expression, expressed by the venom gland.

The protein resides in the secreted. The catalysed reaction is a 1,2-diacyl-sn-glycero-3-phosphocholine + H2O = a 1-acyl-sn-glycero-3-phosphocholine + a fatty acid + H(+). Its function is as follows. Snake venom phospholipase A2 (PLA2) that blocks neuromuscular transmission, but that does not produce blockade by virtue of a selective action on nerve endings. Instead, the toxin acts both on nerve and on muscle. PLA2 catalyzes the calcium-dependent hydrolysis of the 2-acyl groups in 3-sn-phosphoglycerides. The polypeptide is Acidic phospholipase A2 HTe (Notechis scutatus scutatus (Mainland tiger snake)).